Consider the following 206-residue polypeptide: Protein sym1 (206 aa).

2 helical membrane passes run 107-127 (VLLDQAVFAPFGTAFFFSWMT) and 169-189 (LQYQMPFACTVAIFWNIFLSL).

It belongs to the peroxisomal membrane protein PXMP2/4 family.

It is found in the mitochondrion inner membrane. The polypeptide is Protein sym1 (sym1) (Schizosaccharomyces pombe (strain 972 / ATCC 24843) (Fission yeast)).